A 269-amino-acid chain; its full sequence is L-cystine-binding protein TcyJ (269 aa).

Residues 1 to 20 (MNKRKGLVLLLSVFALLGGG) form the signal peptide. Cysteine 21 carries N-palmitoyl cysteine lipidation. Cysteine 21 is lipidated: S-diacylglycerol cysteine.

The protein belongs to the bacterial solute-binding protein 3 family. In terms of assembly, the complex is composed of two ATP-binding proteins (TcyN), two transmembrane proteins (TcyL and TcyM) and two solute-binding proteins (TcyJ and TcyK).

Its subcellular location is the cell membrane. Part of the ABC transporter complex TcyJKLMN involved in L-cystine import. Is also involved in cystathionine, djenkolate, and S-methylcysteine transport. This Bacillus subtilis (strain 168) protein is L-cystine-binding protein TcyJ (tcyJ).